Consider the following 313-residue polypeptide: Short-chain dehydrogenase/reductase family 9C member 7 (313 aa).

29–53 is a binding site for NADP(+); that stretch reads FITGCDSGFGNLLAKQLVDRGMKVL. Residue S160 coordinates substrate. Y172 acts as the Proton acceptor in catalysis. Position 185 is a phosphoserine (S185).

It belongs to the short-chain dehydrogenases/reductases (SDR) family. In terms of tissue distribution, highly expressed in liver.

The protein resides in the cytoplasm. The catalysed reaction is a N-[omega-(9R,10R)-epoxy-(13R)-hydroxy-(11E)-octadecenoyloxy]acyl-beta-D-glucosyl-(1&lt;-&gt;1)-sphing-4E-enine + NAD(+) = a N-[omega-(9R,10R)-epoxy-13-oxo-(11E)-octadecenoyloxy]acyl-beta-D-glucosyl-(1&lt;-&gt;1)-sphing-4E-enine + NADH + H(+). It catalyses the reaction a N-[omega-(9R,10R)-epoxy-(13R)-hydroxy-(11E)-octadecenoyloxy]-acylsphing-4E-enine + NAD(+) = a N-[omega-(9R,10R)-epoxy-13-oxo-(11E)-octadecenoyloxy]-acylsphing-4E-enine + NADH + H(+). Plays a crucial role in the formation of the epidermal permeability barrier. Catalyzes the NAD+-dependent dehydrogenation of the linoleate 9,10-trans-epoxy-11E-13-alcohol esterified in omega-O-acylceramides (such as in N-[omega-(9R,10R)-epoxy-(13R)-hydroxy-(11E)-octadecenoyloxy]-acylsphing-4E-enine) to the corresponding 13-ketone, the reactive moiety required for binding of epidermal ceramides to proteins. Displays weak conversion of all-trans-retinal to all-trans-retinol in the presence of NADH. Has apparently no steroid dehydrogenase activity. This chain is Short-chain dehydrogenase/reductase family 9C member 7 (Sdr9c7), found in Mus musculus (Mouse).